Here is a 192-residue protein sequence, read N- to C-terminus: Transmembrane protein 11, mitochondrial (192 aa).

Positions 1-20 are disordered; it reads MAAWGRRRLGPGSSGGSARE. A run of 2 helical transmembrane segments spans residues 84–100 and 107–124; these read TAVL…LALP and ISLP…LYGI.

The protein belongs to the TMEM11 family. In terms of assembly, associates with the mitochondrial contact site and cristae organizing system (MICOS) complex, composed of at least MICOS10/MIC10, CHCHD3/MIC19, CHCHD6/MIC25, APOOL/MIC27, IMMT/MIC60, APOO/MIC23/MIC26 and QIL1/MIC13. This complex was also known under the names MINOS or MitOS complex. The MICOS complex associates with mitochondrial outer membrane proteins SAMM50, MTX1, MTX2 and DNAJC11, mitochondrial inner membrane protein TMEM11 and with HSPA9. Interacts with IMMT/MIC60.

It is found in the mitochondrion inner membrane. Its function is as follows. Plays a role in mitochondrial morphogenesis. The protein is Transmembrane protein 11, mitochondrial (TMEM11) of Homo sapiens (Human).